Consider the following 224-residue polypeptide: Probable GTP-binding protein EngB (224 aa).

The EngB-type G domain maps to 31–204 (VGVEIAFAGR…LGILDQWCKP (174 aa)). Residues 39–46 (GRSNAGKS), 65–69 (GRTQL), 83–86 (DLPG), 150–153 (TKAD), and 183–185 (FSS) contribute to the GTP site. Ser-46 and Thr-67 together coordinate Mg(2+).

This sequence belongs to the TRAFAC class TrmE-Era-EngA-EngB-Septin-like GTPase superfamily. EngB GTPase family. The cofactor is Mg(2+).

Functionally, necessary for normal cell division and for the maintenance of normal septation. This Shewanella piezotolerans (strain WP3 / JCM 13877) protein is Probable GTP-binding protein EngB.